The chain runs to 229 residues: Aquaporin Z (229 aa).

2 consecutive transmembrane segments (helical) span residues 8 to 28 (FLGT…AAGF) and 33 to 53 (IGFA…AYAI). The short motif at 62–64 (NPA) is the NPA 1 element. The next 3 membrane-spanning stretches (helical) occupy residues 88 to 108 (VLGA…GAGF), 129 to 149 (LLAA…VIMG), and 158 to 178 (GFAP…SIPV). The short motif at 184-186 (NPA) is the NPA 2 element. A helical membrane pass occupies residues 192 to 212 (ALFVGGWAVQQLWLFWLAPII).

It belongs to the MIP/aquaporin (TC 1.A.8) family. Homotetramer.

It is found in the cell inner membrane. The enzyme catalyses H2O(in) = H2O(out). Its function is as follows. Channel that permits osmotically driven movement of water in both directions. It is involved in the osmoregulation and in the maintenance of cell turgor during volume expansion in rapidly growing cells. It mediates rapid entry or exit of water in response to abrupt changes in osmolarity. This chain is Aquaporin Z, found in Chromobacterium violaceum (strain ATCC 12472 / DSM 30191 / JCM 1249 / CCUG 213 / NBRC 12614 / NCIMB 9131 / NCTC 9757 / MK).